We begin with the raw amino-acid sequence, 80 residues long: Large ribosomal subunit protein uL24 (80 aa).

This sequence belongs to the universal ribosomal protein uL24 family. Part of the 50S ribosomal subunit.

In terms of biological role, one of two assembly initiator proteins, it binds directly to the 5'-end of the 23S rRNA, where it nucleates assembly of the 50S subunit. Functionally, one of the proteins that surrounds the polypeptide exit tunnel on the outside of the subunit. The polypeptide is Large ribosomal subunit protein uL24 (Chlorobaculum parvum (strain DSM 263 / NCIMB 8327) (Chlorobium vibrioforme subsp. thiosulfatophilum)).